We begin with the raw amino-acid sequence, 114 residues long: UPF0342 protein SH1117 (114 aa).

Belongs to the UPF0342 family.

In Staphylococcus haemolyticus (strain JCSC1435), this protein is UPF0342 protein SH1117.